The chain runs to 435 residues: Ribulose bisphosphate carboxylase large chain (435 aa).

Substrate-binding residues include asparagine 104 and threonine 154. The active-site Proton acceptor is lysine 156. A substrate-binding site is contributed by lysine 158. Lysine 182, aspartate 184, and glutamate 185 together coordinate Mg(2+). Position 182 is an N6-carboxylysine (lysine 182). The active-site Proton acceptor is the histidine 275. Residues arginine 276, histidine 308, and serine 360 each contribute to the substrate site.

It belongs to the RuBisCO large chain family. Type I subfamily. As to quaternary structure, heterohexadecamer of 8 large chains and 8 small chains. Mg(2+) serves as cofactor.

It localises to the plastid. The protein localises to the chloroplast. The enzyme catalyses 2 (2R)-3-phosphoglycerate + 2 H(+) = D-ribulose 1,5-bisphosphate + CO2 + H2O. It catalyses the reaction D-ribulose 1,5-bisphosphate + O2 = 2-phosphoglycolate + (2R)-3-phosphoglycerate + 2 H(+). Its function is as follows. RuBisCO catalyzes two reactions: the carboxylation of D-ribulose 1,5-bisphosphate, the primary event in carbon dioxide fixation, as well as the oxidative fragmentation of the pentose substrate in the photorespiration process. Both reactions occur simultaneously and in competition at the same active site. This is Ribulose bisphosphate carboxylase large chain from Euglena pisciformis.